The primary structure comprises 112 residues: MKNKLGIILVCNCLFSLFINRGVGAEETINIGDCSFNGHPLYGKIQLVGSFPDLTVQVVSSFPDLKVQLVESFPNQCGQWQIVTSFPDTKVQIVESFPDVKIQYVDSFPGLP.

The protein to U.parvum UU089.1.

This is an uncharacterized protein from Synechocystis sp. (strain ATCC 27184 / PCC 6803 / Kazusa).